We begin with the raw amino-acid sequence, 316 residues long: Probable cell division protein WhiA (316 aa).

Residues 275-309 (TLKELGEMVASGKISKSGINHRLRKLDEIAEQLRT) constitute a DNA-binding region (H-T-H motif).

The protein belongs to the WhiA family.

Its function is as follows. Involved in cell division and chromosome segregation. The chain is Probable cell division protein WhiA from Bacillus velezensis (strain DSM 23117 / BGSC 10A6 / LMG 26770 / FZB42) (Bacillus amyloliquefaciens subsp. plantarum).